The primary structure comprises 135 residues: MPGTERANRVATVLQWILNIGLMALAAILVIFLAKETFTLAGVLFDANQNASTYMLVEGIVIYFLYFEFIALIVKYFQSGYHFPLRYFIYIGITAIIRLIIVDHESPNDTLIYSFAILVLVIALYLANTDRLKRE.

4 consecutive transmembrane segments (helical) span residues 13–33, 54–74, 82–102, and 107–127; these read VLQWILNIGLMALAAILVIFL, YMLVEGIVIYFLYFEFIALIV, HFPLRYFIYIGITAIIRLIIV, and PNDTLIYSFAILVLVIALYLA.

The protein belongs to the PsiE family.

It localises to the cell inner membrane. This is Protein PsiE homolog from Edwardsiella ictaluri (strain 93-146).